A 511-amino-acid chain; its full sequence is Sphingosine-1-phosphate transporter MFSD2B (511 aa).

The next 9 membrane-spanning stretches (helical) occupy residues 108 to 128, 136 to 156, 236 to 256, 280 to 300, 323 to 343, 357 to 377, 379 to 399, 415 to 435, and 462 to 482; these read MPWM…LWFV, VLWY…YHVP, IAAG…FLGV, TMQF…SAAV, NLVL…QWFL, LMIP…AYVV, VASG…LPDV, AIFY…ALGI, and LLIG…LAFY.

The protein belongs to the major facilitator superfamily.

It localises to the cell membrane. The catalysed reaction is sphing-4-enine 1-phosphate(in) = sphing-4-enine 1-phosphate(out). It catalyses the reaction sphinganine 1-phosphate(in) = sphinganine 1-phosphate(out). It carries out the reaction sphinga-4E,14Z-dienine-1-phosphate(in) = sphinga-4E,14Z-dienine-1-phosphate(out). Functionally, lipid transporter that specifically mediates export of sphingosine-1-phosphate in red blood cells and platelets. Sphingosine-1-phosphate is a signaling sphingolipid and its export from red blood cells into in the plasma is required for red blood cell morphology. Sphingosine-1-phosphate export from platelets is required for platelet aggregation and thrombus formation. In addition to export, also able to mediate S1P import. The chain is Sphingosine-1-phosphate transporter MFSD2B from Xenopus tropicalis (Western clawed frog).